A 336-amino-acid chain; its full sequence is Dual specificity mitogen-activated protein kinase kinase sek-1 (336 aa).

Residues 50–311 form the Protein kinase domain; that stretch reads LVVLEELGKG…YPELLAMPFM (262 aa). ATP contacts are provided by residues 56–64 and Lys-79; that span reads LGKGGYGIV. Residue Asp-176 is the Proton acceptor of the active site. Position 204 is a phosphoserine (Ser-204). Position 208 is a phosphothreonine (Thr-208).

It belongs to the protein kinase superfamily. STE Ser/Thr protein kinase family. MAP kinase kinase subfamily. Interacts with nsy-1. Interacts with unc-16. Mg(2+) serves as cofactor. Expressed in linker cell in males.

The enzyme catalyses L-seryl-[protein] + ATP = O-phospho-L-seryl-[protein] + ADP + H(+). It catalyses the reaction L-threonyl-[protein] + ATP = O-phospho-L-threonyl-[protein] + ADP + H(+). The catalysed reaction is L-tyrosyl-[protein] + ATP = O-phospho-L-tyrosyl-[protein] + ADP + H(+). Its activity is regulated as follows. Activated by nsy-1-mediated phosphorylation. In terms of biological role, dual specificity protein kinase which acts as an essential component of the p38 signal transduction pathway which is also composed of upstream effector nsy-1 and downstream effector pmk-1. May phosphorylate pmk-1. Downstream of CaMKII unc-43 and adapter protein tir-1, plays a role in determining asymmetric cell fates in olfactory AWC neurons during neuronal development. Activation results in the repression of odorant receptor str-2 expression in one of the 2 AWC neurons. Involved in resistance to pathogenic Gram-positive and Gram-negative bacterial and fungal infection. Involved in resistance to the nematotoxic C.cinerea galectin Cgl2. Probably by promoting pmk-1-mediated activation of skn-1, involved in the up-regulation of gcs-1 and glutathione-S-transferase gst-4 expression upon bacterial infection. Probably downstream of tir-1, required for the expression of antimicrobial peptide nlp-29 in the epidermis in response to fungal infection or physical injury. Regulates susceptibility of B.thuringiensis pore-forming toxin Cry5B and Cry21A. Involved in the response to oxidative stress. May regulate transcription factor daf-16 localization during oxidative stress. By phosphorylating pmk-1, regulates skn-1 localization during oxidative stress. By phosphorylating and activating pmk-1, plays a role in the stabilization of transcription factor rnt-1 in the intestine during oxidative stress. Up-regulates expression of gcs-1 in intestine upon arsenite treatment. Regulates germline proliferation in response to osmotic stress, starvation and germline apoptosis induced by heavy metals, such as Cu(2+). In association with mek-1, regulates germline cell apoptosis in response to oxidative, osmotic and heat shock stresses. Plays a role downstream of tir-1/nsy-1 in regulating susceptibility to anoxia. In males, by regulating pqn-41 expression, involved in non-apoptotic death of the linker cell which guides gonad elongation during larval development. Involved in egg laying. This chain is Dual specificity mitogen-activated protein kinase kinase sek-1, found in Caenorhabditis elegans.